The chain runs to 651 residues: Threonine--tRNA ligase (651 aa).

The region spanning 1-61 (MIKITFPDNS…NDDATVKLLK (61 aa)) is the TGS domain. Residues 242-541 (DHRKIGKEMD…LIEHTAGKFP (300 aa)) form a catalytic region. Zn(2+)-binding residues include Cys-337, His-388, and His-518.

Belongs to the class-II aminoacyl-tRNA synthetase family. As to quaternary structure, homodimer. The cofactor is Zn(2+).

It localises to the cytoplasm. It carries out the reaction tRNA(Thr) + L-threonine + ATP = L-threonyl-tRNA(Thr) + AMP + diphosphate + H(+). Its function is as follows. Catalyzes the attachment of threonine to tRNA(Thr) in a two-step reaction: L-threonine is first activated by ATP to form Thr-AMP and then transferred to the acceptor end of tRNA(Thr). Also edits incorrectly charged L-seryl-tRNA(Thr). In Parabacteroides distasonis (strain ATCC 8503 / DSM 20701 / CIP 104284 / JCM 5825 / NCTC 11152), this protein is Threonine--tRNA ligase.